A 318-amino-acid chain; its full sequence is Mitochondrial fission regulator 1 (318 aa).

2 disordered regions span residues 101 to 121 and 154 to 193; these read RPLR…AQQS and QEQS…PSMQ. Positions 124-157 form a coiled coil; that stretch reads VINDEAIQKISVLETELAKLRAQIAQIVQAQEQS. Over residues 154 to 164 the composition is skewed to low complexity; sequence QEQSAQSTAPA. Over residues 165 to 189 the composition is skewed to pro residues; the sequence is PGGPPVPPPMVPVPPPPPPPPPCPT. A necessary and sufficient to promote mitochondrial fission region spans residues 168–296; the sequence is PPVPPPMVPV…TFTFTAFENK (129 aa).

This sequence belongs to the MTFR1 family.

It localises to the mitochondrion. Functionally, may play a role in mitochondrial aerobic respiration. May also regulate mitochondrial organization and fission. The protein is Mitochondrial fission regulator 1 (mtfr1) of Danio rerio (Zebrafish).